The sequence spans 290 residues: MKKKALLPLFLGIMVFLAGCDYSKPEKRSGFFYNTFVDPMKNVLDWLGNNLLNDNYGLAIIILVLVIRIILLPFMLSNYKNSHMMRQKMKVAKPEVEKIQEKVKRARTQEEKMAANQELMQVYKKYDMNPIKSMLGCLPMLIQLPIIMGLYFVLKDQLVDGLFKYPHFLWFDLGRPDIWITIIAGVLYFIQAYVSSKTMPDEQRQMGYMMMVISPIMIIWISLSSASALGLYWSVSAAFLVVQTHFANIYYEKVAKKEVQPFIEAYEREHNGGSNKKGKNTQVVSKKKKK.

Residues 1–19 (MKKKALLPLFLGIMVFLAG) form the signal peptide. C20 carries N-palmitoyl cysteine lipidation. C20 carries S-diacylglycerol cysteine lipidation. Helical transmembrane passes span 56-76 (YGLAIIILVLVIRIILLPFML), 134-154 (MLGCLPMLIQLPIIMGLYFVL), 176-196 (PDIWITIIAGVLYFIQAYVSS), 207-224 (GYMMMVISPIMIIWISLS), and 229-251 (LGLYWSVSAAFLVVQTHFANIYY). The segment at 270–290 (HNGGSNKKGKNTQVVSKKKKK) is disordered.

Belongs to the OXA1/ALB3/YidC family. Type 2 subfamily.

The protein resides in the cell membrane. Functionally, required for the insertion and/or proper folding and/or complex formation of integral membrane proteins into the membrane. Involved in integration of membrane proteins that insert both dependently and independently of the Sec translocase complex, as well as at least some lipoproteins. The chain is Membrane protein insertase YidC from Staphylococcus aureus (strain Mu3 / ATCC 700698).